Here is a 1045-residue protein sequence, read N- to C-terminus: Probable sucrose-phosphate synthase (1045 aa).

Basic and acidic residues-rich tracts occupy residues 93–115 (ENEEAQRKTKRRMELERGRREAT) and 124–137 (EGEKDISAHGDSTR). Disordered regions lie at residues 93–141 (ENEE…PRLP), 222–243 (WSYGEPTEMLNPRDSNGFDDDD), and 662–692 (IASSRQRQPQWQRSSDEGLDNQEPESPSDSL). Residues 664–674 (SSRQRQPQWQR) are compositionally biased toward low complexity.

This sequence belongs to the glycosyltransferase 1 family. As to quaternary structure, homodimer or homotetramer. In terms of tissue distribution, predominantly active in tap root.

The enzyme catalyses beta-D-fructose 6-phosphate + UDP-alpha-D-glucose = sucrose 6(F)-phosphate + UDP + H(+). Its pathway is glycan biosynthesis; sucrose biosynthesis; sucrose from D-fructose 6-phosphate and UDP-alpha-D-glucose: step 1/2. With respect to regulation, activity is regulated by phosphorylation and moderated by concentration of metabolites and light. Functionally, plays a role in photosynthetic sucrose synthesis by catalyzing the rate-limiting step of sucrose biosynthesis from UDP-glucose and fructose- 6-phosphate. Involved in the regulation of carbon partitioning in the leaves of plants. May regulate the synthesis of sucrose and therefore play a major role as a limiting factor in the export of photoassimilates out of the leaf. Plays a role for sucrose availability that is essential for plant growth and fiber elongation. This is Probable sucrose-phosphate synthase (SPS) from Beta vulgaris (Sugar beet).